Consider the following 224-residue polypeptide: Cytochrome c oxidase subunit 2 (224 aa).

Residues M1 to H26 lie on the Mitochondrial intermembrane side of the membrane. A helical membrane pass occupies residues A27–N48. Residues T49–E62 are Mitochondrial matrix-facing. Residues T63–R82 traverse the membrane as a helical segment. The Mitochondrial intermembrane portion of the chain corresponds to L83 to N224. Cu cation contacts are provided by H161, C196, E198, C200, H204, and M207. Residue E198 coordinates Mg(2+).

The protein belongs to the cytochrome c oxidase subunit 2 family. In terms of assembly, component of the cytochrome c oxidase (complex IV, CIV), a multisubunit enzyme composed of a catalytic core of 3 subunits and several supernumerary subunits. The complex exists as a monomer or a dimer and forms supercomplexes (SCs) in the inner mitochondrial membrane with ubiquinol-cytochrome c oxidoreductase (cytochrome b-c1 complex, complex III, CIII). The cofactor is Cu cation.

Its subcellular location is the mitochondrion inner membrane. It carries out the reaction 4 Fe(II)-[cytochrome c] + O2 + 8 H(+)(in) = 4 Fe(III)-[cytochrome c] + 2 H2O + 4 H(+)(out). Component of the cytochrome c oxidase, the last enzyme in the mitochondrial electron transport chain which drives oxidative phosphorylation. The respiratory chain contains 3 multisubunit complexes succinate dehydrogenase (complex II, CII), ubiquinol-cytochrome c oxidoreductase (cytochrome b-c1 complex, complex III, CIII) and cytochrome c oxidase (complex IV, CIV), that cooperate to transfer electrons derived from NADH and succinate to molecular oxygen, creating an electrochemical gradient over the inner membrane that drives transmembrane transport and the ATP synthase. Cytochrome c oxidase is the component of the respiratory chain that catalyzes the reduction of oxygen to water. Electrons originating from reduced cytochrome c in the intermembrane space (IMS) are transferred via the dinuclear copper A center (CU(A)) of subunit 2 and heme A of subunit 1 to the active site in subunit 1, a binuclear center (BNC) formed by heme A3 and copper B (CU(B)). The BNC reduces molecular oxygen to 2 water molecules using 4 electrons from cytochrome c in the IMS and 4 protons from the mitochondrial matrix. The protein is Cytochrome c oxidase subunit 2 (COII) of Albinaria turrita (Door snail).